We begin with the raw amino-acid sequence, 494 residues long: Glutamate decarboxylase 2 (494 aa).

The residue at position 276 (Lys-276) is an N6-(pyridoxal phosphate)lysine. The segment at 463 to 494 is calmodulin-binding; it reads VKEKKMEKEILMEVIVGWRKFVKERKKMNGVC.

It belongs to the group II decarboxylase family. In terms of assembly, homohexamer. Interacts with calmodulin. Pyridoxal 5'-phosphate is required as a cofactor. As to expression, expressed in roots, inflorescence stems, flowers, siliques and leaves.

The enzyme catalyses L-glutamate + H(+) = 4-aminobutanoate + CO2. Its activity is regulated as follows. Up-regulated by calmodulin binding at physiological pH. Its function is as follows. Catalyzes the conversion of glutamate to 4-aminobutanoate (GABA). The calmodulin-binding is calcium-dependent and it is proposed to directly or indirectly form a calcium regulated control of GABA biosynthesis. This is Glutamate decarboxylase 2 (GAD2) from Arabidopsis thaliana (Mouse-ear cress).